A 206-amino-acid chain; its full sequence is uncharacterized protein (206 aa).

A run of 4 helical transmembrane segments spans residues 9–29 (ILSL…SVLT), 47–67 (LGVV…LAFL), 74–94 (FFVI…INTI), and 150–170 (IAVI…FYAF).

This sequence belongs to the Rht family.

It localises to the cell membrane. This is an uncharacterized protein from Synechocystis sp. (strain ATCC 27184 / PCC 6803 / Kazusa).